Reading from the N-terminus, the 367-residue chain is Putrescine-binding periplasmic protein SpuD (367 aa).

The signal sequence occupies residues 1-24 (MMKRFGKTLLALTLAGSVAGMAQA). A putrescine-binding site is contributed by 36–37 (SD). Cysteine 173 and cysteine 236 are oxidised to a cystine. Putrescine contacts are provided by aspartate 244 and aspartate 275.

Belongs to the bacterial solute-binding protein PotD/PotF family.

It is found in the periplasm. The protein resides in the secreted. Its function is as follows. Putrescine-binding protein probably required for putrescine uptake into cells. Binds putrescine with high affinity, spermidine with relatively low affinity. Does not bind cadaverine or spermine. Putrescine binding induces large inter-domain conformational changes. This chain is Putrescine-binding periplasmic protein SpuD (spuD), found in Pseudomonas aeruginosa (strain UCBPP-PA14).